Here is a 605-residue protein sequence, read N- to C-terminus: Protein Spindly (605 aa).

At Met1 the chain carries N-acetylmethionine. Positions 2-442 (EADIITNLRC…ELKLKYEPEE (441 aa)) form a coiled coil. Residues Ser513, Ser515, and Ser555 each carry the phosphoserine modification. A disordered region spans residues 544-580 (ALSERSGNTPNSPRLAAESKLQTEVKEGKETSSKLEK). Residues 564–580 (LQTEVKEGKETSSKLEK) are compositionally biased toward basic and acidic residues.

The protein belongs to the Spindly family. In terms of assembly, interacts with KNTC1 and ZW10. These interactions appear weak and may be transient or indirect. Interacts with dynein intermediate chain and dynactin (DCTN1). Interacts with the catalytically active form of USP45. In terms of processing, monoubiquitinated with'Lys-48' linkage. Deubiquitinated by USP45.

It is found in the cytoplasm. Its subcellular location is the cytoskeleton. The protein localises to the microtubule organizing center. It localises to the centrosome. The protein resides in the chromosome. It is found in the centromere. Its subcellular location is the kinetochore. The protein localises to the nucleus. It localises to the spindle pole. Its function is as follows. Required for the localization of dynein and dynactin to the mitotic kintochore. Dynein is believed to control the initial lateral interaction between the kinetochore and spindle microtubules and to facilitate the subsequent formation of end-on kinetochore-microtubule attachments mediated by the NDC80 complex. Also required for correct spindle orientation. Does not appear to be required for the removal of spindle assembly checkpoint (SAC) proteins from the kinetochore upon bipolar spindle attachment. Acts as an adapter protein linking the dynein motor complex to various cargos and converts dynein from a non-processive to a highly processive motor in the presence of dynactin. Facilitates the interaction between dynein and dynactin and activates dynein processivity (the ability to move along a microtubule for a long distance without falling off the track). Plays a role in cell migration. The polypeptide is Protein Spindly (Homo sapiens (Human)).